The sequence spans 896 residues: Echinoderm microtubule-associated protein-like 3 (896 aa).

Met1 bears the N-acetylmethionine mark. Residues 16–43 (LQSLSQRLRVQEQEMELVKAALAEALRL) are a coiled coil. The tract at residues 50–209 (PSSLQGSGTP…GGPGSRRSNY (160 aa)) is disordered. A compositionally biased stretch (polar residues) spans 77-88 (TPSLVSRGTQTE). Pro residues predominate over residues 134-145 (PGPPGILRPLQP). Residues 154–163 (RNSSSSSSPS) are compositionally biased toward low complexity. Positions 174-189 (AISSANLLVRSGSTES) are enriched in polar residues. A phosphoserine mark is found at Ser176, Ser198, and Ser204. WD repeat units follow at residues 234–286 (RSLE…LYRP), 295–344 (GGGQ…IWDS), 350–392 (LQEI…VWDC), 398–434 (LAEIKSTNDSVLAVGFNPRDSSCIVTSGKSHVHFWNW), 448–487 (RKQGVFGKYKKPKFIPCFVFLPDGDILTGDSEGNILTWGR), 504–543 (YGIVAQAHAHEGSIFALCLRRDGTVLSGGGRDRRLVQWGP), 549–584 (QEAEIPEHFGAVRAIAEGLGSELLVGTTKNALLRGD), 589–626 (FSPVIQGHTDELWGLCTHPSQNRFLTCGHDRQLCLWDG), 629–667 (HALAWSIDLKETGLCADFHPSGAVVAVGLNTGRWLVLDT), 674–709 (SDVIDGNEQLSVVRYSPDGLYLAIGSHDNVIYIYSV), 716–755 (SSRFGRCMGHSSFITHLDWSKDGNFIMSNSGDYEILYWDV), 765–823 (RYES…LFQY), and 830–869 (APSRMYGGHGSHVTSVRFTHDDSHLVSLGGKDASIFQWRV). The disordered stretch occupies residues 876-896 (GPAPATPSRTPSLSPASSLDV). A compositionally biased stretch (low complexity) spans 877–896 (PAPATPSRTPSLSPASSLDV). Thr881 carries the post-translational modification Phosphothreonine; by CDK1. Position 883 is a phosphoserine (Ser883).

The protein belongs to the WD repeat EMAP family. Homotrimer; self-association is mediated by the N-terminal coiled coil. Interacts with EML2 but not with EML1. Interacts (phosphorylated at Thr-881) with TUBG1, HAUS1, HAUS2, HAUS3, HAUS4, HAUS5, HAUS6, HAUS7 and HAUS8. Post-translationally, phosphorylation at Thr-881 during mitosis is required for interaction with TUBG1, HAUS1, HAUS2, HAUS3, HAUS4, HAUS5, HAUS6, HAUS7 and HAUS8 and their recruitment to spindle microtubules.

It localises to the cytoplasm. Its subcellular location is the cytoskeleton. The protein localises to the nucleus. It is found in the midbody. The protein resides in the spindle. In terms of biological role, regulates mitotic spindle assembly, microtubule (MT)-kinetochore attachment and chromosome separation via recruitment of HAUS augmin-like complex and TUBG1 to the existing MTs and promoting MT-based MT nucleation. Required for proper alignnment of chromosomes during metaphase. The protein is Echinoderm microtubule-associated protein-like 3 (EML3) of Homo sapiens (Human).